Here is an 800-residue protein sequence, read N- to C-terminus: Phenylalanine--tRNA ligase beta subunit (800 aa).

The tRNA-binding domain maps to 39-154 (TKDIKNLVVG…EAQVPGTDAL (116 aa)). Residues 408 to 483 (AFITPIDITA…RIYGYDDIPS (76 aa)) form the B5 domain. Mg(2+)-binding residues include aspartate 461, aspartate 467, glutamate 470, and glutamate 471. Residues 708-800 (PRFPGMSRDI…ALIEQGAVIR (93 aa)) enclose the FDX-ACB domain.

It belongs to the phenylalanyl-tRNA synthetase beta subunit family. Type 1 subfamily. Tetramer of two alpha and two beta subunits. The cofactor is Mg(2+).

The protein localises to the cytoplasm. It catalyses the reaction tRNA(Phe) + L-phenylalanine + ATP = L-phenylalanyl-tRNA(Phe) + AMP + diphosphate + H(+). The chain is Phenylalanine--tRNA ligase beta subunit from Staphylococcus aureus (strain COL).